The sequence spans 198 residues: Recombination protein RecR (198 aa).

The segment at 56–71 adopts a C4-type zinc-finger fold; the sequence is CHVCGNVDTGDPCGIC. In terms of domain architecture, Toprim spans 79–174; it reads RMLCVVEEVA…RLTQLAHGLP (96 aa).

This sequence belongs to the RecR family.

Its function is as follows. May play a role in DNA repair. It seems to be involved in an RecBC-independent recombinational process of DNA repair. It may act with RecF and RecO. The polypeptide is Recombination protein RecR (Rhizorhabdus wittichii (strain DSM 6014 / CCUG 31198 / JCM 15750 / NBRC 105917 / EY 4224 / RW1) (Sphingomonas wittichii)).